We begin with the raw amino-acid sequence, 460 residues long: uncharacterized protein (460 aa).

One can recognise a TRAM domain in the interval 5–63; that stretch reads TWHQGELIEVAIADLSDTGDGVGRFAERVVFVPDTVPGDRVLVRLLHVKPNYAHGKLHQ. 4 residues coordinate [4Fe-4S] cluster: cysteine 76, cysteine 82, cysteine 85, and cysteine 164. 4 residues coordinate S-adenosyl-L-methionine: glutamine 288, tyrosine 317, glutamate 338, and aspartate 383. Residue cysteine 410 is the Nucleophile of the active site.

The protein belongs to the class I-like SAM-binding methyltransferase superfamily. RNA M5U methyltransferase family.

This is an uncharacterized protein from Nostoc sp. (strain PCC 7120 / SAG 25.82 / UTEX 2576).